The chain runs to 1037 residues: Multidrug resistance protein MdtF (1037 aa).

Residues 1–9 (MANYFIDRP) are Cytoplasmic-facing. Residues 10-30 (VFAWVLAIIMMLAGGLAIMNL) form a helical membrane-spanning segment. Residues 31–338 (PVAQYPQIAP…TTPFIKISIQ (308 aa)) lie on the Periplasmic side of the membrane. Residues 339 to 359 (EVFKTLVEAIILVFLVMYLFL) form a helical membrane-spanning segment. Residues 360 to 369 (QNFRATIIPT) are Cytoplasmic-facing. The chain crosses the membrane as a helical span at residues 370-390 (IAVPVVILGTFAILSAVGFTI). Residues 391-392 (NT) are Periplasmic-facing. Residues 393-413 (LTMFGMVLAIGLLVDDAIVVV) form a helical membrane-spanning segment. Over 414-440 (ENVERVIAEDKLPPKEATHKSMGQIQR) the chain is Cytoplasmic. The chain crosses the membrane as a helical span at residues 441–461 (ALVGIAVVLSAVFMPMAFMSG). Residues 462 to 471 (ATGEIYRQFS) lie on the Periplasmic side of the membrane. A helical membrane pass occupies residues 472–492 (ITLISSMLLSVFVAMSLTPAL). At 493 to 534 (CATILKAAPEGGHKPNALFARFNTLFEKSTQHYTDSTRSLLR) the chain is on the cytoplasmic side. The helical transmembrane segment at 535–555 (CTGRYMVVYLLICAGMAVLFL) threads the bilayer. Topologically, residues 556–870 (RTPTSFLPEE…SYQEALSSNQ (315 aa)) are periplasmic. Residues 871-891 (APALYAISLVVVFLALAALYE) form a helical membrane-spanning segment. Position 892 (serine 892) is a topological domain, cytoplasmic. The chain crosses the membrane as a helical span at residues 893-913 (WSIPFSVMLVVPLGVVGALLA). Residues 914-927 (TDLRGLSNDVYFQV) are Periplasmic-facing. A helical transmembrane segment spans residues 928-948 (GLLTTIGLSAKNAILIVEFAV). Residues 949 to 972 (EMMQKEGKTPVEAIIEAARMRLRP) lie on the Cytoplasmic side of the membrane. The chain crosses the membrane as a helical span at residues 973–993 (ILMTSLAFILGVLPLVISHGA). The Periplasmic segment spans residues 994–1006 (GSGAQNAVGTGVM). Residues 1007–1027 (GGMFAATVLAIYFVPVFFVVV) form a helical membrane-spanning segment. The Cytoplasmic segment spans residues 1028–1037 (EHLFARFKKA).

It belongs to the resistance-nodulation-cell division (RND) (TC 2.A.6) family. In terms of assembly, homotrimer. Part of the tripartite efflux system MdtEF-TolC, which is composed of an inner membrane transporter, MdtF, a membrane fusion protein, MdtE, and an outer membrane component, TolC. The complex forms a large protein conduit and can translocate molecules across both the inner and outer membranes.

Its subcellular location is the cell inner membrane. Its function is as follows. Part of the tripartite efflux system MdtEF-TolC, which confers resistance to various compounds. This is Multidrug resistance protein MdtF (mdtF) from Escherichia coli O6:H1 (strain CFT073 / ATCC 700928 / UPEC).